A 20-amino-acid polypeptide reads, in one-letter code: Alpha-conotoxin-like ts14a (20 aa).

Disulfide bonds link cysteine 3–cysteine 16 and cysteine 14–cysteine 20.

Expressed by the venom duct.

It is found in the secreted. Functionally, alpha-conotoxins act on postsynaptic membranes, they bind to the nicotinic acetylcholine receptors (nAChR) and thus inhibit them. This is Alpha-conotoxin-like ts14a from Conus tessulatus (Tessellate cone).